We begin with the raw amino-acid sequence, 221 residues long: CASP-like protein 4C1 (221 aa).

The segment at 1–21 (MDSPESSDRGLNPMTPDHGGH) is disordered. The Cytoplasmic segment spans residues 1–54 (MDSPESSDRGLNPMTPDHGGHNGKVVHYFGQGVEGGPASPRKLGHGHLHPKANT). Residues 55–75 (ALLLLRLLTFAFSLASLVIMA) form a helical membrane-spanning segment. Residues 76–101 (TNSATTTATAGRHRTVNWVDFDTYRY) lie on the Extracellular side of the membrane. A helical membrane pass occupies residues 102–122 (VLAACAIVCLYSFAEIGLGLW). Residues 123-144 (YLLKGRMVMPESMAHWFDFGHD) are Cytoplasmic-facing. A helical membrane pass occupies residues 145–165 (QGFAYLIFSACSGATAVAHNL). Residues 166 to 189 (RERHILIHGMYGCDEANSFCMKAE) are Extracellular-facing. A helical transmembrane segment spans residues 190-210 (ISIGLAFGAFLFIALSSLLSG). At 211–221 (YRLVKWLILGP) the chain is on the cytoplasmic side.

It belongs to the Casparian strip membrane proteins (CASP) family. Homodimer and heterodimers.

Its subcellular location is the cell membrane. This chain is CASP-like protein 4C1, found in Pteridium aquilinum subsp. aquilinum (Bracken fern).